Consider the following 161-residue polypeptide: Large ribosomal subunit protein uL15 (161 aa).

A compositionally biased stretch (basic and acidic residues) spans 1-10 (MKLNELRDNP). The interval 1–42 (MKLNELRDNPGARPKSKRLGRGIGSGKGKTSGKGVKGQKARE) is disordered. The span at 21–35 (RGIGSGKGKTSGKGV) shows a compositional bias: gly residues.

The protein belongs to the universal ribosomal protein uL15 family. In terms of assembly, part of the 50S ribosomal subunit.

Its function is as follows. Binds to the 23S rRNA. The sequence is that of Large ribosomal subunit protein uL15 from Acidiphilium cryptum (strain JF-5).